The following is a 748-amino-acid chain: Translation factor GUF1 homolog 1, mitochondrial (748 aa).

Residues 1–29 (MRVGCCLLLKPIRQRLCTASISSRHIMRW) constitute a mitochondrion transit peptide. The tr-type G domain occupies 94-276 (SHIRNFAVVA…AIIERVPPPT (183 aa)). GTP-binding positions include 103–110 (AHVDHGKT), 167–171 (DTPGH), and 221–224 (TKMD).

It belongs to the TRAFAC class translation factor GTPase superfamily. Classic translation factor GTPase family. LepA subfamily.

Its subcellular location is the mitochondrion inner membrane. The catalysed reaction is GTP + H2O = GDP + phosphate + H(+). Promotes mitochondrial protein synthesis. May act as a fidelity factor of the translation reaction, by catalyzing a one-codon backward translocation of tRNAs on improperly translocated ribosomes. Binds to mitochondrial ribosomes in a GTP-dependent manner. The sequence is that of Translation factor GUF1 homolog 1, mitochondrial from Trypanosoma cruzi (strain CL Brener).